We begin with the raw amino-acid sequence, 329 residues long: Ribosomal RNA small subunit methyltransferase H (329 aa).

S-adenosyl-L-methionine is bound by residues 46 to 48 (GGH), Asp-65, Phe-92, Asp-113, and His-120. Residues 295 to 329 (RGAERPSPAEVAANPRAASARLRAAEKIRDTREAA) are disordered. Basic and acidic residues predominate over residues 317-329 (RAAEKIRDTREAA).

The protein belongs to the methyltransferase superfamily. RsmH family.

The protein localises to the cytoplasm. The catalysed reaction is cytidine(1402) in 16S rRNA + S-adenosyl-L-methionine = N(4)-methylcytidine(1402) in 16S rRNA + S-adenosyl-L-homocysteine + H(+). Specifically methylates the N4 position of cytidine in position 1402 (C1402) of 16S rRNA. This Acidothermus cellulolyticus (strain ATCC 43068 / DSM 8971 / 11B) protein is Ribosomal RNA small subunit methyltransferase H.